We begin with the raw amino-acid sequence, 175 residues long: Cytochrome c homolog (175 aa).

Topologically, residues 1 to 8 (MTGKELNK) are cytoplasmic. Residues 9–29 (IVAAILFASLIAMIVGFIANI) form a helical; Signal-anchor membrane-spanning segment. Topologically, residues 30 to 175 (LYKPNLHVLH…LFLKNYVHDQ (146 aa)) are periplasmic. Cys84, Cys87, His88, and Met150 together coordinate heme c.

It belongs to the cytochrome c family. Binds 1 heme c group covalently per subunit.

The protein resides in the cell membrane. In terms of biological role, may be involved in electron transfer from bc1 complex to aa3. The chain is Cytochrome c homolog (cycM) from Rickettsia prowazekii (strain Madrid E).